The following is a 374-amino-acid chain: Glutamate 5-kinase (374 aa).

Position 16 (lysine 16) interacts with ATP. Substrate contacts are provided by serine 56, aspartate 143, and asparagine 155. Residue 175-176 (TD) participates in ATP binding. One can recognise a PUA domain in the interval 282 to 360 (KGCFVVDEGA…TRIEEILGYV (79 aa)).

It belongs to the glutamate 5-kinase family.

It localises to the cytoplasm. The enzyme catalyses L-glutamate + ATP = L-glutamyl 5-phosphate + ADP. It participates in amino-acid biosynthesis; L-proline biosynthesis; L-glutamate 5-semialdehyde from L-glutamate: step 1/2. Its function is as follows. Catalyzes the transfer of a phosphate group to glutamate to form L-glutamate 5-phosphate. The polypeptide is Glutamate 5-kinase (Methylococcus capsulatus (strain ATCC 33009 / NCIMB 11132 / Bath)).